Here is a 588-residue protein sequence, read N- to C-terminus: Probable G-protein coupled receptor 162 (588 aa).

Residues 1 to 17 (MARGGLGAEEASLRSNA) are Extracellular-facing. The chain crosses the membrane as a helical span at residues 18-38 (LSWLACGLLALLANAWIILSI). Residues 39 to 49 (SAKQQKHKPLE) are Cytoplasmic-facing. Residues 50 to 70 (LLLCFLAGTHILMAAVPLTTF) traverse the membrane as a helical segment. Over 71-91 (AVVQLRRQASSDYDWNESICK) the chain is Extracellular. An N-linked (GlcNAc...) asparagine glycan is attached at N86. Residues 92 to 112 (VFVSTYYTLALATCFTVASLS) form a helical membrane-spanning segment. The Cytoplasmic segment spans residues 113 to 133 (YHRMWMVRWPVNYRLSNAKKQ). A helical transmembrane segment spans residues 134 to 154 (ALHAVMGIWMVSFILSTLPSI). The Extracellular segment spans residues 155–174 (GWHNNGERYYARGCQFIVSK). A helical transmembrane segment spans residues 175 to 195 (IGLGFGVCFSLLLLGGIVMGL). Topologically, residues 196–275 (VCVAITFYQT…SLQVTNLVSA (80 aa)) are cytoplasmic. The helical transmembrane segment at 276 to 296 (IVFLYDSLTGVPILVVSFFSL) threads the bilayer. Residues 297–303 (KSDSAPP) are Extracellular-facing. A helical transmembrane segment spans residues 304 to 324 (WMVLAVLWCSMAQTLLLPSFI). Residues 325–588 (WSCERYRADV…GNPIFPQLTL (264 aa)) lie on the Cytoplasmic side of the membrane. S413 and S435 each carry phosphoserine. Disordered stretches follow at residues 511-545 (ETPL…SPDS) and 561-588 (SLTG…QLTL). Residues 514 to 525 (LPSPTASPGPSP) are compositionally biased toward pro residues. A compositionally biased stretch (low complexity) spans 530-540 (PLGFSPRRLSL).

It belongs to the G-protein coupled receptor 1 family.

It localises to the cell membrane. Orphan receptor. The sequence is that of Probable G-protein coupled receptor 162 (Gpr162) from Mus musculus (Mouse).